Here is a 205-residue protein sequence, read N- to C-terminus: Small ribosomal subunit protein uS4 (205 aa).

The interval 1–46 (MSKRASSKYKIDRRMGENIWGRPKSPVNRREYGPGQHGQRRKGKLS) is disordered. The S4 RNA-binding domain occupies 94 to 154 (SRLDAIVYRA…QKSKQLAIVL (61 aa)).

The protein belongs to the universal ribosomal protein uS4 family. Part of the 30S ribosomal subunit. Contacts protein S5. The interaction surface between S4 and S5 is involved in control of translational fidelity.

Functionally, one of the primary rRNA binding proteins, it binds directly to 16S rRNA where it nucleates assembly of the body of the 30S subunit. Its function is as follows. With S5 and S12 plays an important role in translational accuracy. In Allorhizobium ampelinum (strain ATCC BAA-846 / DSM 112012 / S4) (Agrobacterium vitis (strain S4)), this protein is Small ribosomal subunit protein uS4.